A 226-amino-acid polypeptide reads, in one-letter code: Transmembrane gamma-carboxyglutamic acid protein 4 (226 aa).

Positions 1–17 are cleaved as a signal peptide; the sequence is MFPLLIVLSQLPRLTLA. Residues 18–49 constitute a propeptide that is removed on maturation; it reads VPHCIRSLKDSEHAPEEVFASKEAANIFMHRR. Topologically, residues 50 to 113 are extracellular; the sequence is LLNNRFDLEL…GSDVNKEKID (64 aa). The Gla domain occupies 52 to 98; sequence NNRFDLELFTPGDLERECYEEFCSYEEAREILGDDENTIKFWQTYSI. Cysteine 69 and cysteine 74 are joined by a disulfide. Glutamate 72 carries the 4-carboxyglutamate modification. The helical transmembrane segment at 114–134 threads the bilayer; sequence VMSLLTGLIVAGVFLVIFGLV. Topologically, residues 135–226 are cytoplasmic; sequence GYYVCLTKCK…FKKSMSLPSH (92 aa). Position 164 is a phosphoserine (serine 164). The short motif at 186 to 189 is the LPXY motif; mediates binding to WW domain-containing proteins element; sequence LPSY. The PPXY motif; mediates binding to WW domain-containing proteins signature appears at 204 to 207; the sequence is PPPY.

Belongs to the commissureless family. As to quaternary structure, interacts (via cytoplasmic domain) with WW domain-containing proteins MAGI1, MAGI3, NEDD4, NEDD4L, WWTR1/TAZ and YAP1. Post-translationally, gamma-carboxyglutamate residues are formed by vitamin K dependent carboxylation. These residues are essential for the binding of calcium.

It localises to the endoplasmic reticulum-Golgi intermediate compartment membrane. Its subcellular location is the cell membrane. Its function is as follows. May control axon guidance across the CNS. Prevents the delivery of ROBO1 at the cell surface and down-regulates its expression. The polypeptide is Transmembrane gamma-carboxyglutamic acid protein 4 (Prrg4) (Mus musculus (Mouse)).